The primary structure comprises 100 residues: Urease subunit gamma 2 (100 aa).

It belongs to the urease gamma subunit family. Heterotrimer of UreA (gamma), UreB (beta) and UreC (alpha) subunits. Three heterotrimers associate to form the active enzyme.

Its subcellular location is the cytoplasm. It catalyses the reaction urea + 2 H2O + H(+) = hydrogencarbonate + 2 NH4(+). Its pathway is nitrogen metabolism; urea degradation; CO(2) and NH(3) from urea (urease route): step 1/1. In terms of biological role, disrupting the ure2 operon has no effect on urease activity or pathogen survival in BALB/c mice when administered orally. The chain is Urease subunit gamma 2 from Brucella abortus (strain 2308).